The following is a 396-amino-acid chain: 1-deoxy-D-xylulose 5-phosphate reductoisomerase (396 aa).

Threonine 13, glycine 14, serine 15, isoleucine 16, and asparagine 127 together coordinate NADPH. Lysine 128 contributes to the 1-deoxy-D-xylulose 5-phosphate binding site. Glutamate 129 lines the NADPH pocket. Aspartate 153 provides a ligand contact to Mn(2+). Serine 154, glutamate 155, serine 184, and histidine 207 together coordinate 1-deoxy-D-xylulose 5-phosphate. Glutamate 155 provides a ligand contact to Mn(2+). Glycine 213 is a binding site for NADPH. 1-deoxy-D-xylulose 5-phosphate contacts are provided by serine 220, asparagine 225, lysine 226, and glutamate 229. Glutamate 229 provides a ligand contact to Mn(2+).

The protein belongs to the DXR family. Mg(2+) is required as a cofactor. Requires Mn(2+) as cofactor.

It carries out the reaction 2-C-methyl-D-erythritol 4-phosphate + NADP(+) = 1-deoxy-D-xylulose 5-phosphate + NADPH + H(+). Its pathway is isoprenoid biosynthesis; isopentenyl diphosphate biosynthesis via DXP pathway; isopentenyl diphosphate from 1-deoxy-D-xylulose 5-phosphate: step 1/6. In terms of biological role, catalyzes the NADPH-dependent rearrangement and reduction of 1-deoxy-D-xylulose-5-phosphate (DXP) to 2-C-methyl-D-erythritol 4-phosphate (MEP). The chain is 1-deoxy-D-xylulose 5-phosphate reductoisomerase from Pseudomonas syringae pv. syringae (strain B728a).